The primary structure comprises 918 residues: MATFARMKLCLSGSSQAIPSKGISLVAARFQSTASRASYVTPPYEKLMGKLQQVRKFLPGQKLTLAEKVLYSHLVNPEESFSGVSPSDIRGSLYLKLNPDRVAMQDASAQMALLQFMTCGLEKTMIPASIHCDHLIVGHRGANSDIPDSIANNKEIFDFLQSAAKKYGIQFWGPGSGIIHQIVLENYAAPGGMMLGTDSHTPNAGGLGMIAIGVGGADAVDAMTNTPWELKAPKIIGVNLTGAMSGWTTPKDLILHLAGKLTVRGGTGHIIEYFGPGVASLSCTGMATVCNMGAEVGATTSIFPYTDSMRRYLIATHRAEVADAASEVHSEYNYLAADTGAKYDQIIDINLSELTPSLNGPFTPDLSTPVSKFGEAIEKNKWPKKLSAGLIGSCTNSSYQDMTCVVDVVEQAISAGLKPKVPFLVTPGSEQIRATIERDGITERLEEAGATVLANACGPCIGMWKRTDDIASGEPNAILTSFNRNFRSRNDGNPSTMNFLTSPVIVAAKIFSSDLAFDPTHDTLQTPDGKAFKFRPPQGVELPSAGFIAGDSSYIPEPNPQPVPETEVTIDPKSDRLEALEPFEPYQGGEMENLKVAVKVKGKCTTDHISAAGKWLKYKGHLSNICNNTLIGAMNAATGEVNRAYDNGKGMTIPELMWKWKKDGQPWLVVAEHNYGEGSAREHAALQPRAMNGRIILTKSFARIHETNLKKQGVLPLTFVNEADYEKIDAEDKVSTRGIEQLLEGVLDQPITLVVTKKDGSVVEIPCKHTMSKDQIEFFKAGSALNLIREKAHSGVVNQKVIDSIKQQPDHYADAYIFNRHFVIAKGDQLGLPFHLKGVQVGDTIRLDKIASFGSRDFTLFGNPYVDPSLFTIEAVVLSFPKSALSVRVKHKRRHRHDRVMKHKQTYTILRVTELKLN.

Residues 1-30 (MATFARMKLCLSGSSQAIPSKGISLVAARF) constitute a mitochondrion transit peptide. Residues 31–811 (QSTASRASYV…IDSIKQQPDH (781 aa)) are homocitrate dehydratase, mitochondrial. Substrate contacts are provided by residues Gln-105 and 198–200 (DSH). Cys-394, Cys-457, and Cys-460 together coordinate [4Fe-4S] cluster. Substrate-binding positions include Arg-484, Arg-489, Lys-619, and 680–681 (AR). Residues 812–918 (YADAYIFNRH…ILRVTELKLN (107 aa)) form a large ribosomal subunit protein bL21m region.

The protein in the N-terminal section; belongs to the aconitase/IPM isomerase family. It in the C-terminal section; belongs to the bacterial ribosomal protein bL21 family. In terms of assembly, component of the mitochondrial large ribosomal subunit (mt-LSU). Mature yeast 74S mitochondrial ribosomes consist of a small (37S) and a large (54S) subunit. The 37S small subunit contains a 15S ribosomal RNA (15S mt-rRNA) and at least 32 different proteins. The 54S large subunit contains a 21S rRNA (21S mt-rRNA) and at least 45 different proteins. Requires [4Fe-4S] cluster as cofactor.

The protein resides in the mitochondrion. The protein localises to the nucleus. The enzyme catalyses (2R)-homocitrate = cis-homoaconitate + H2O. It functions in the pathway amino-acid biosynthesis; L-lysine biosynthesis via AAA pathway; L-alpha-aminoadipate from 2-oxoglutarate: step 2/5. Catalyzes the reversible dehydration of (R)-homocitrate to cis-homoaconitate, a step in the alpha-aminoadipate pathway for lysine biosynthesis. Functionally, component of the mitochondrial ribosome (mitoribosome), a dedicated translation machinery responsible for the synthesis of mitochondrial genome-encoded proteins, including at least some of the essential transmembrane subunits of the mitochondrial respiratory chain. The mitoribosomes are attached to the mitochondrial inner membrane and translation products are cotranslationally integrated into the membrane. This is Aconitase-ribosomal protein bL21m fusion protein (aco2) from Schizosaccharomyces pombe (strain 972 / ATCC 24843) (Fission yeast).